The sequence spans 94 residues: Small ribosomal subunit protein uS19 (94 aa).

The protein belongs to the universal ribosomal protein uS19 family.

In terms of biological role, protein S19 forms a complex with S13 that binds strongly to the 16S ribosomal RNA. This Anaplasma phagocytophilum (strain HZ) protein is Small ribosomal subunit protein uS19.